A 932-amino-acid chain; its full sequence is von Willebrand factor A domain-containing protein DDB_G0292028 (932 aa).

Positions 1 to 49 (MNFIKKVIGGGSSKSKTDIKIEDEQHEQQHEQQHEKQQIPDKISTSKVN) are disordered. The segment covering 15–39 (SKTDIKIEDEQHEQQHEQQHEKQQI) has biased composition (basic and acidic residues). A VIT domain is found at 95–222 (LTSPGLNTKV…DVTVNITITS (128 aa)). The VWFA domain occupies 342 to 521 (EFIFVLDCSG…IAMQPTLSNI (180 aa)). Disordered stretches follow at residues 661–752 (QQIN…SQAQ) and 800–834 (TSQI…STSS). Positions 677-686 (TRVQGSSSVF) are enriched in polar residues. Residues 815 to 834 (SSSPTIQKSSSLPSRPSTSS) show a composition bias toward low complexity.

This Dictyostelium discoideum (Social amoeba) protein is von Willebrand factor A domain-containing protein DDB_G0292028.